Here is a 232-residue protein sequence, read N- to C-terminus: Triosephosphate isomerase (232 aa).

Residue 6–8 participates in substrate binding; the sequence is NLK. The Electrophile role is filled by His-91. The active-site Proton acceptor is the Glu-158. Substrate is bound by residues Gly-164 and Ser-194.

Belongs to the triosephosphate isomerase family. As to quaternary structure, homodimer.

It localises to the cytoplasm. The catalysed reaction is D-glyceraldehyde 3-phosphate = dihydroxyacetone phosphate. It participates in carbohydrate biosynthesis; gluconeogenesis. The protein operates within carbohydrate degradation; glycolysis; D-glyceraldehyde 3-phosphate from glycerone phosphate: step 1/1. Functionally, involved in the gluconeogenesis. Catalyzes stereospecifically the conversion of dihydroxyacetone phosphate (DHAP) to D-glyceraldehyde-3-phosphate (G3P). The chain is Triosephosphate isomerase from Campylobacter hominis (strain ATCC BAA-381 / DSM 21671 / CCUG 45161 / LMG 19568 / NCTC 13146 / CH001A).